Reading from the N-terminus, the 231-residue chain is Quercetin 2,3-dioxygenase (231 aa).

A divalent metal cation contacts are provided by histidine 57, histidine 59, histidine 101, and glutamate 103.

It belongs to the pirin family. It depends on Zn(2+) as a cofactor. Co(2+) serves as cofactor. Fe(2+) is required as a cofactor.

The enzyme catalyses quercetin + O2 = 2-(3,4-dihydroxybenzoyloxy)-4,6-dihydroxybenzoate + CO. It functions in the pathway flavonoid metabolism; quercetin degradation. With respect to regulation, inhibited by kojic acid, sodium diethyldithiocarbamate and 1,10-phenanthroline monohydrochloride. Functionally, has quercetin 2,3-dioxygenase activity in vitro. Its physiological role is unknown; however, may provide a mechanism that would avoid inhibition of key cellular proteins, such as DNA gyrase, by quercetin. In Escherichia coli (strain K12), this protein is Quercetin 2,3-dioxygenase (yhhW).